The sequence spans 367 residues: Phosphoribosylaminoimidazole-succinocarboxamide synthase (367 aa).

This sequence belongs to the SAICAR synthetase family.

The catalysed reaction is 5-amino-1-(5-phospho-D-ribosyl)imidazole-4-carboxylate + L-aspartate + ATP = (2S)-2-[5-amino-1-(5-phospho-beta-D-ribosyl)imidazole-4-carboxamido]succinate + ADP + phosphate + 2 H(+). Its pathway is purine metabolism; IMP biosynthesis via de novo pathway; 5-amino-1-(5-phospho-D-ribosyl)imidazole-4-carboxamide from 5-amino-1-(5-phospho-D-ribosyl)imidazole-4-carboxylate: step 1/2. In Aliivibrio fischeri (strain ATCC 700601 / ES114) (Vibrio fischeri), this protein is Phosphoribosylaminoimidazole-succinocarboxamide synthase.